Reading from the N-terminus, the 123-residue chain is Ribosome-binding factor A (123 aa).

It belongs to the RbfA family. As to quaternary structure, monomer. Binds 30S ribosomal subunits, but not 50S ribosomal subunits or 70S ribosomes.

The protein resides in the cytoplasm. Functionally, one of several proteins that assist in the late maturation steps of the functional core of the 30S ribosomal subunit. Associates with free 30S ribosomal subunits (but not with 30S subunits that are part of 70S ribosomes or polysomes). Required for efficient processing of 16S rRNA. May interact with the 5'-terminal helix region of 16S rRNA. This chain is Ribosome-binding factor A, found in Delftia acidovorans (strain DSM 14801 / SPH-1).